The primary structure comprises 261 residues: Hydroxyethylthiazole kinase (261 aa).

Methionine 38 contacts substrate. The ATP site is built by arginine 114 and threonine 159. Residue glycine 186 participates in substrate binding.

This sequence belongs to the Thz kinase family. Mg(2+) is required as a cofactor.

The catalysed reaction is 5-(2-hydroxyethyl)-4-methylthiazole + ATP = 4-methyl-5-(2-phosphooxyethyl)-thiazole + ADP + H(+). It participates in cofactor biosynthesis; thiamine diphosphate biosynthesis; 4-methyl-5-(2-phosphoethyl)-thiazole from 5-(2-hydroxyethyl)-4-methylthiazole: step 1/1. In terms of biological role, catalyzes the phosphorylation of the hydroxyl group of 4-methyl-5-beta-hydroxyethylthiazole (THZ). The chain is Hydroxyethylthiazole kinase from Halalkalibacterium halodurans (strain ATCC BAA-125 / DSM 18197 / FERM 7344 / JCM 9153 / C-125) (Bacillus halodurans).